The sequence spans 339 residues: 5-dehydro-2-deoxygluconokinase (339 aa).

This sequence belongs to the carbohydrate kinase PfkB family.

It catalyses the reaction 5-dehydro-2-deoxy-D-gluconate + ATP = 6-phospho-5-dehydro-2-deoxy-D-gluconate + ADP + H(+). It participates in polyol metabolism; myo-inositol degradation into acetyl-CoA; acetyl-CoA from myo-inositol: step 5/7. In terms of biological role, catalyzes the phosphorylation of 5-dehydro-2-deoxy-D-gluconate (2-deoxy-5-keto-D-gluconate or DKG) to 6-phospho-5-dehydro-2-deoxy-D-gluconate (DKGP). In Clostridium botulinum (strain Eklund 17B / Type B), this protein is 5-dehydro-2-deoxygluconokinase.